The following is a 118-amino-acid chain: NADH-ubiquinone oxidoreductase chain 3 (118 aa).

Transmembrane regions (helical) follow at residues 7 to 27 and 87 to 107; these read ICIY…LPFL and IDPF…IGSL.

The protein belongs to the complex I subunit 3 family.

Its subcellular location is the mitochondrion membrane. The catalysed reaction is a ubiquinone + NADH + 5 H(+)(in) = a ubiquinol + NAD(+) + 4 H(+)(out). Functionally, core subunit of the mitochondrial membrane respiratory chain NADH dehydrogenase (Complex I) that is believed to belong to the minimal assembly required for catalysis. Complex I functions in the transfer of electrons from NADH to the respiratory chain. The immediate electron acceptor for the enzyme is believed to be ubiquinone. This is NADH-ubiquinone oxidoreductase chain 3 (ND3) from Solanum tuberosum (Potato).